A 210-amino-acid polypeptide reads, in one-letter code: Large ribosomal subunit protein bL25 (210 aa).

The interval 191 to 210 (KPAPKAAETDEDGEEAASEE) is disordered. Acidic residues predominate over residues 199 to 210 (TDEDGEEAASEE).

It belongs to the bacterial ribosomal protein bL25 family. CTC subfamily. As to quaternary structure, part of the 50S ribosomal subunit; part of the 5S rRNA/L5/L18/L25 subcomplex. Contacts the 5S rRNA. Binds to the 5S rRNA independently of L5 and L18.

In terms of biological role, this is one of the proteins that binds to the 5S RNA in the ribosome where it forms part of the central protuberance. The sequence is that of Large ribosomal subunit protein bL25 from Alteromonas mediterranea (strain DSM 17117 / CIP 110805 / LMG 28347 / Deep ecotype).